The primary structure comprises 145 residues: Transmembrane protein CCDC163 (145 aa).

A helical membrane pass occupies residues 38–54 (LIGLCICFFCSSGCIFL).

Its subcellular location is the membrane. This is Transmembrane protein CCDC163 from Homo sapiens (Human).